A 110-amino-acid chain; its full sequence is Large ribosomal subunit protein uL22 (110 aa).

Belongs to the universal ribosomal protein uL22 family. Part of the 50S ribosomal subunit.

Functionally, this protein binds specifically to 23S rRNA; its binding is stimulated by other ribosomal proteins, e.g. L4, L17, and L20. It is important during the early stages of 50S assembly. It makes multiple contacts with different domains of the 23S rRNA in the assembled 50S subunit and ribosome. In terms of biological role, the globular domain of the protein is located near the polypeptide exit tunnel on the outside of the subunit, while an extended beta-hairpin is found that lines the wall of the exit tunnel in the center of the 70S ribosome. The sequence is that of Large ribosomal subunit protein uL22 from Marinobacter nauticus (strain ATCC 700491 / DSM 11845 / VT8) (Marinobacter aquaeolei).